Reading from the N-terminus, the 359-residue chain is PWWP domain-containing protein 1 (359 aa).

Positions 1–37 (MNNARTNAKRRRLSSKQGGLSISEGKESNIPSVVEES) are disordered. Positions 52 to 114 (FGDRILVKAP…RNSVKPLLDS (63 aa)) constitute a PWWP domain. Disordered stretches follow at residues 133–161 (AYEA…AAEE) and 204–255 (VAST…SPLN). Positions 204–224 (VASTSRSSTQLSDQRYPLSSN) are enriched in polar residues. A Phosphoserine modification is found at serine 252.

In terms of assembly, interacts with set9 and histone H4K20me1. Associates with nucleosomes.

It is found in the nucleus. Functionally, necessary for DNA damage checkpoint activation. Required for the association of set9 with chromatin and subsequent methylation of H4K20. Associates with H4K20me1 to increase the concentration of set9 on chromatin to perform H4K20me3. H4K20me3 is mainly enriched at heterochromatin and is required for proper heterochromatin assembly. In Schizosaccharomyces pombe (strain 972 / ATCC 24843) (Fission yeast), this protein is PWWP domain-containing protein 1 (pdp1).